The primary structure comprises 322 residues: Formimidoylglutamase (322 aa).

Mn(2+) is bound by residues His-130, Asp-156, His-158, Asp-160, Cys-245, and Asp-247.

The protein belongs to the arginase family. Mn(2+) is required as a cofactor.

It carries out the reaction N-formimidoyl-L-glutamate + H2O = formamide + L-glutamate. Its pathway is amino-acid degradation; L-histidine degradation into L-glutamate; L-glutamate from N-formimidoyl-L-glutamate (hydrolase route): step 1/1. In terms of biological role, catalyzes the conversion of N-formimidoyl-L-glutamate to L-glutamate and formamide. In Lysinibacillus sphaericus (strain C3-41), this protein is Formimidoylglutamase.